The following is a 1043-amino-acid chain: Beta-klotho (1043 aa).

Residues 1–994 are Extracellular-facing; the sequence is MKTGCAAGSP…ICSFLVEKKP (994 aa). Glycosyl hydrolase-1 stretches follow at residues 77-506 and 515-965; these read LYDT…DNGF and MKGR…SSGL. Residues Asn-84, Asn-122, Asn-161, Asn-211, Asn-262, Asn-308, Asn-389, Asn-552, Asn-609, Asn-700, Asn-704, and Asn-837 are each glycosylated (N-linked (GlcNAc...) asparagine). The chain crosses the membrane as a helical span at residues 995–1015; that stretch reads LIFFGCCFISTLAVLLSITVF. Residues 1016 to 1043 lie on the Cytoplasmic side of the membrane; that stretch reads HHQKRRKFQKARNLQNIPLKKGHSRVFS.

This sequence belongs to the glycosyl hydrolase 1 family. Klotho subfamily. As to quaternary structure, interacts with FGF19; this interaction is direct. Interacts (via C-terminus) with FGF21; this interaction is direct. Interacts with FGFR1 and FGFR4. Present in liver, muscle and white adipose tissue, but not in kidney (at protein level). Expressed in liver and pancreas, and at lower levels in skin, stomach, skeletal muscle, small intestine and lung.

It is found in the cell membrane. In terms of biological role, contributes to the transcriptional repression of cholesterol 7-alpha-hydroxylase (CYP7A1), the rate-limiting enzyme in bile acid synthesis. Probably inactive as a glycosidase. Increases the ability of FGFR1 and FGFR4 to bind FGF21. This is Beta-klotho (Klb) from Mus musculus (Mouse).